Here is a 498-residue protein sequence, read N- to C-terminus: Cytochrome P450 71D15 (498 aa).

The chain crosses the membrane as a helical; Signal-anchor for type II membrane protein span at residues 3 to 23 (LLQLWSALIILVVTYTISLLI). Cysteine 437 contributes to the heme binding site.

It belongs to the cytochrome P450 family. Heme is required as a cofactor.

It localises to the endoplasmic reticulum membrane. The catalysed reaction is (4S)-limonene + reduced [NADPH--hemoprotein reductase] + O2 = (1S,6R)-isopiperitenol + oxidized [NADPH--hemoprotein reductase] + H2O + H(+). Functionally, hydroxylates (-)-(4S)-limonene to (-)-trans-isopiperitenol, a precursor of (-)-menthol, responsible for the cooling sensation of peppermint. Fluorinated substrate analogs are hydroxylated with the same regio- and stereochemistry. This is Cytochrome P450 71D15 (CYP71D15) from Mentha piperita (Peppermint).